The chain runs to 219 residues: Transmembrane emp24 domain-containing protein 10 (219 aa).

The N-terminal stretch at methionine 1–alanine 31 is a signal peptide. Positions methionine 1–glutamate 142 are required for interaction with STX17. Topologically, residues isoleucine 32–arginine 185 are lumenal. The GOLD domain maps to arginine 41–serine 193. Residues leucine 147–threonine 178 are required for TMED10 and TMED2 cis-Golgi network localization. Arginine 171 and arginine 176 each carry dimethylated arginine. N-linked (GlcNAc...) asparagine glycosylation is present at asparagine 179. Residues valine 186–phenylalanine 206 form a helical membrane-spanning segment. Positions glutamine 204–glutamate 219 are interaction with COPG1. The Cytoplasmic portion of the chain corresponds to tyrosine 207–glutamate 219. Residues tyrosine 207–glutamate 219 are interaction with ARF1 and IL1B. The COPII vesicle coat-binding signature appears at phenylalanine 211 to phenylalanine 212. The short motif at phenylalanine 211–glutamate 219 is the COPI vesicle coat-binding element.

The protein belongs to the EMP24/GP25L family. Predominantly dimeric and to a lesser extent monomeric in the ER. Monomer and dimer in ERGIC and cis-Golgi network. Forms homooligomer (via GOLD domain); the assembly is promoted by direct binding with leaderless cargos and may form a protein channel that facilitates cargo entry into the ERGIC. Forms heterooligomeric complexes with other members of the p24 family such as TMED2, TMED7 and TMED9. Interacts (via GOLD domain) with TMED2 (via GOLD domain); the complex is required for export of TMED10 from the ER to the cis-Golgi network; the complex is proposed to be involved in cis-Golgi network dynamics and / or biogenesis. Associates with the COPI vesicle coat subunits (coatomer). Tetramerization of the cytoplasmic domain at the Golgi membrane in vitro; the complex is proposed to interact with COPI coatomer and induce budding of the vesicles. Interacts with COPG1; the interaction involves TMED10 homodimer. Interacts with ARF1 (GDP-bound); the interaction probably involves a TMED10 oligomer. Interacts with SEC23A, SEC24B, SEC24C and SEC24D components of the coat protein complex II/COPII, indicative of an association of TMED10 with the COPII vesicle coat. Interacts with CD59. Interacts with MPPE1/PGAP5; the complex might recruit and sort GPI-anchored proteins to the ER-exit site, or the interaction might lead to recycling of PGAP5 between the ER and the Golgi. Interacts with F2LR1/PAR2. Interacts with KDELR2/ERD2; the interaction is disrupted by KDELR2 ligand. Found in a complex composed at least of SURF4, TMED2 and TMED10. Associates with the presenilin-dependent gamma-secretase complex. Interacts with STX17; the interaction is direct. Interacts with IL-1; the interaction is direct. Interacts with RAB21 (active GTP-bound form); the interaction is indirect and regulates TMED10 abundance and localization at the Golgi.

It is found in the endoplasmic reticulum membrane. It localises to the endoplasmic reticulum-Golgi intermediate compartment membrane. Its subcellular location is the golgi apparatus membrane. The protein localises to the golgi apparatus. The protein resides in the cis-Golgi network membrane. It is found in the trans-Golgi network membrane. It localises to the cytoplasmic vesicle. Its subcellular location is the secretory vesicle membrane. The protein localises to the cell membrane. The protein resides in the melanosome. Functionally, cargo receptor involved in protein vesicular trafficking and quality control in the endoplasmic reticulum (ER) and Golgi. The p24 protein family is a group of transmembrane proteins that bind coat protein complex I/COPI and coat protein complex II/COPII involved in vesicular trafficking between the membranes. Acts at the lumenal side for incorporation of secretory cargo molecules into transport vesicles and involved in vesicle coat formation at the cytoplasmic side. Mainly functions in the early secretory pathway and cycles between the ER, ER-Golgi intermediate compartment (ERGIC) and Golgi, mediating cargo transport through COPI and COPII-coated vesicles. In COPII vesicle-mediated anterograde transport, involved in the transport of GPI-anchored proteins by acting together with TMED2 as their cargo receptor; the function specifically implies SEC24C and SEC24D of the COPII vesicle coat and lipid raft-like microdomains of the ER. Recognizes GPI anchors structural remodeled in the ER by the GPI inositol-deacylase/PGAP1 and the metallophosphoesterase MPPE1/PGAP5. In COPI vesicle-mediated retrograde transport, involved in the biogenesis of COPI vesicles and vesicle coat recruitment. Involved in trafficking of amyloid beta A4 protein and soluble APP-beta release (independent from the modulation of gamma-secretase activity). Involved in the KDELR2-mediated retrograde transport of the toxin A subunit (CTX-A-K63)together with COPI and the COOH terminus of KDELR2. On Golgi membranes, acts as a primary receptor for ARF1-GDP, a GTP-binding protein involved in COPI-vesicle formation. Increases coatomer-dependent GTPase-activating activity of ARFGAP2 which mediates the hydrolysis of ARF1-bound GTP and therefore modulates protein trafficking from the Golgi apparatus. Involved in the exocytic trafficking of G protein-coupled receptors F2LR1/PAR2 (trypsin and tryspin-like enzyme receptor), OPRM1 (opioid receptor) and P2RY4 (UTD and UDP receptor) from the Golgi to the plasma membrane, thus contributing to receptor resensitization. In addition to its cargo receptor activity, may also act as a protein channel after oligomerization, facilitating the post-translational entry of leaderless cytoplasmic cargo into the ERGIC. Involved in the translocation into ERGIC, the vesicle entry and the secretion of leaderless cargos (lacking the secretion signal sequence), including the mature form of interleukin 1/IL-1 family members, the alpha-crystallin B chain HSPB5, the carbohydrate-binding proteins galectin-1/LGALS1 and galectin-3/LGALS3, the microtubule-associated protein Tau/MAPT, and the annexin A1/ANXA1; the translocation process is dependent on cargo protein unfolding and enhanced by chaperones HSP90AB1 and HSP90B1/GRP9. Could also associates with the presenilin-dependent gamma-secretase complex in order to regulate gamma-cleavages of the amyloid beta A4 protein to yield amyloid-beta 40/Abeta40. The sequence is that of Transmembrane emp24 domain-containing protein 10 from Homo sapiens (Human).